The sequence spans 1402 residues: Nuclear pore complex protein Nup160 (1402 aa).

Ser10, Ser456, Ser915, and Ser1123 each carry phosphoserine.

As to quaternary structure, part of the nuclear pore complex (NPC). Forms part of the NUP160 subcomplex in the nuclear pore which is composed of NUP160, NUP133, NUP107 and NUP96. This complex plays a role in RNA export and in tethering NUP98 and NUP153 to the nucleus.

Its subcellular location is the nucleus. It is found in the nuclear pore complex. Functionally, functions as a component of the nuclear pore complex (NPC). Involved in poly(A)+ RNA transport. This is Nuclear pore complex protein Nup160 (Nup160) from Mus musculus (Mouse).